Reading from the N-terminus, the 261-residue chain is DNA-directed RNA polymerase subunit Rpo3 (261 aa).

The protein belongs to the archaeal Rpo3/eukaryotic RPB3 RNA polymerase subunit family. Part of the RNA polymerase complex.

Its subcellular location is the cytoplasm. The enzyme catalyses RNA(n) + a ribonucleoside 5'-triphosphate = RNA(n+1) + diphosphate. Functionally, DNA-dependent RNA polymerase (RNAP) catalyzes the transcription of DNA into RNA using the four ribonucleoside triphosphates as substrates. This Pyrococcus furiosus (strain ATCC 43587 / DSM 3638 / JCM 8422 / Vc1) protein is DNA-directed RNA polymerase subunit Rpo3.